Consider the following 492-residue polypeptide: 3,6-anhydro-alpha-L-galactose dehydrogenase (492 aa).

Residues 160-161, 184-187, and 237-238 each bind NADP(+); these read WN, KPSE, and GS. Residue glutamate 259 is the Proton acceptor of the active site. Leucine 260 lines the NADP(+) pocket. Cysteine 293 serves as the catalytic Nucleophile. Glutamate 394 contacts NADP(+).

The protein belongs to the aldehyde dehydrogenase family.

The enzyme catalyses 3,6-anhydro-alpha-L-galactopyranose + NADP(+) + H2O = 3,6-anhydro-L-galactonate + NADPH + 2 H(+). Its activity is regulated as follows. Significantly inhibited by EDTA. Activity is enhanced by Fe(2+), but is strongly inhibited by Mn(2+), Cu(2+), Zn(2+), Ni(2+) and Co(2+). In terms of biological role, involved in the degradation of 3,6-anhydro-L-galactose, which is the major monomeric sugar of red macroalgae. Catalyzes the oxidation of 3,6-anhydro-L-galactose (AHG) to form 3,6-anhydrogalactonate (AHGA). Shows broad substrate specificity, with maximum activity toward AHG. The enzyme activities toward D-fructose, D-galactose and D-ribose are between 40% and 50% of the maximum, but those toward L-rhamnose, L-glyceraldehyde, D-glyceraldehyde, L-fucose and D-glucose are much lower. The protein is 3,6-anhydro-alpha-L-galactose dehydrogenase of Streptomyces coelicolor (strain ATCC BAA-471 / A3(2) / M145).